A 626-amino-acid chain; its full sequence is tRNA uridine 5-carboxymethylaminomethyl modification enzyme MnmG (626 aa).

13–18 provides a ligand contact to FAD; sequence GGGHAG. 273-287 provides a ligand contact to NAD(+); that stretch reads GPRYCPSIEDKIHRF.

The protein belongs to the MnmG family. In terms of assembly, homodimer. Heterotetramer of two MnmE and two MnmG subunits. The cofactor is FAD.

It is found in the cytoplasm. Functionally, NAD-binding protein involved in the addition of a carboxymethylaminomethyl (cmnm) group at the wobble position (U34) of certain tRNAs, forming tRNA-cmnm(5)s(2)U34. In Acinetobacter baumannii (strain SDF), this protein is tRNA uridine 5-carboxymethylaminomethyl modification enzyme MnmG.